A 446-amino-acid polypeptide reads, in one-letter code: FAD-dependent monooxygenase eupB (446 aa).

A helical transmembrane segment spans residues 10–30 (EPHIAIVGGGIVGVILTLGLL). A glycan (N-linked (GlcNAc...) asparagine) is linked at asparagine 33. FAD-binding residues include glutamate 40, alanine 53, and arginine 125. Catalysis depends on residues arginine 206 and tyrosine 239. Residue asparagine 243 is glycosylated (N-linked (GlcNAc...) asparagine). Residues aspartate 322 and alanine 335 each coordinate FAD. N-linked (GlcNAc...) asparagine glycosylation occurs at asparagine 395.

This sequence belongs to the paxM FAD-dependent monooxygenase family. It depends on FAD as a cofactor.

The protein localises to the membrane. It functions in the pathway secondary metabolite biosynthesis; terpenoid biosynthesis. Functionally, FAD-dependent monooxygenase; part of the gene cluster that mediates the biosynthesis of eupenifeldin, a bistropolone meroterpenoid that acts as an antitumor agent. The first step of eupenifeldin biosynthesis is the biosynthesis of 3-methylorcinaldehyde performed by the non-reducing polyketide synthase eupA. Oxidative dearomatization of 3-methylorcinaldehyde likely catalyzed by the FAD-dependent monooxygenase eupB is followed by oxidative ring expansion by the 2-oxoglutarate-dependent dioxygenase eupC to provide the first tropolone metabolite, tropolone stipitaldehyde. In parallel, generation of sesquiterpene alpha-humulene from farnesylpyrophosphate (FPP) is catalyzed by the terpene cyclase eupE. The cytochrome P450 monooxygenase eupD then hydroxylates humulene to humulenol. The putative Diels-Alderase eupF probably catalyzes the formation of the tropolone-humulene skeleton by linking humulenol and the polyketide moiety. The short-chain dehydrogenase/reductase eupG and the flavin-dependent monooxygenase eupH are also essential for eupenifeldin biosynthesis and are likely the additional decorating enzymes of the tropolone-humulene skeleton to produce final eupenifeldin or derivatives. The chain is FAD-dependent monooxygenase eupB from Phoma sp.